The chain runs to 35 residues: Dermonecrotic toxin LgSicTox-beta-LOXN4 (35 aa).

Residue aspartate 20 coordinates Mg(2+).

It belongs to the arthropod phospholipase D family. Class II subfamily. Mg(2+) is required as a cofactor. Post-translationally, contains 2 disulfide bonds. As to expression, expressed by the venom gland.

The protein resides in the secreted. It catalyses the reaction an N-(acyl)-sphingosylphosphocholine = an N-(acyl)-sphingosyl-1,3-cyclic phosphate + choline. The enzyme catalyses an N-(acyl)-sphingosylphosphoethanolamine = an N-(acyl)-sphingosyl-1,3-cyclic phosphate + ethanolamine. It carries out the reaction a 1-acyl-sn-glycero-3-phosphocholine = a 1-acyl-sn-glycero-2,3-cyclic phosphate + choline. The catalysed reaction is a 1-acyl-sn-glycero-3-phosphoethanolamine = a 1-acyl-sn-glycero-2,3-cyclic phosphate + ethanolamine. Its function is as follows. Dermonecrotic toxins cleave the phosphodiester linkage between the phosphate and headgroup of certain phospholipids (sphingolipid and lysolipid substrates), forming an alcohol (often choline) and a cyclic phosphate. This toxin acts on sphingomyelin (SM). It may also act on ceramide phosphoethanolamine (CPE), lysophosphatidylcholine (LPC) and lysophosphatidylethanolamine (LPE), but not on lysophosphatidylserine (LPS), and lysophosphatidylglycerol (LPG). It acts by transphosphatidylation, releasing exclusively cyclic phosphate products as second products. Induces dermonecrosis, hemolysis, increased vascular permeability, edema, inflammatory response, and platelet aggregation. The chain is Dermonecrotic toxin LgSicTox-beta-LOXN4 from Loxosceles gaucho (Spider).